Reading from the N-terminus, the 1486-residue chain is Chromosome partition protein MukB (1486 aa).

34-41 (GGNGAGKS) is an ATP binding site. Coiled coils occupy residues 334–418 (SDHL…QYNQ), 444–480 (LETF…QAYQ), and 509–603 (RHLA…RAPV). Residues 666 to 783 (PGGSEDQRLN…EVPLFGRAAR (118 aa)) are flexible hinge. Coiled-coil stretches lie at residues 835–923 (EAEI…AKLE), 977–1115 (EMLS…TAKA), and 1209–1266 (VEAI…QNVS).

Belongs to the SMC family. MukB subfamily. As to quaternary structure, homodimerization via its hinge domain. Binds to DNA via its C-terminal region. Interacts, and probably forms a ternary complex, with MukE and MukF via its C-terminal region. The complex formation is stimulated by calcium or magnesium. Interacts with tubulin-related protein FtsZ.

Its subcellular location is the cytoplasm. It is found in the nucleoid. Functionally, plays a central role in chromosome condensation, segregation and cell cycle progression. Functions as a homodimer, which is essential for chromosome partition. Involved in negative DNA supercoiling in vivo, and by this means organize and compact chromosomes. May achieve or facilitate chromosome segregation by condensation DNA from both sides of a centrally located replisome during cell division. This Shigella sonnei (strain Ss046) protein is Chromosome partition protein MukB.